The following is a 1013-amino-acid chain: Polyprotein of EF-Ts, chloroplastic (1013 aa).

The N-terminal 43 residues, methionine 1–phenylalanine 43, are a transit peptide targeting the chloroplast. The 70-residue stretch at glycine 64 to lysine 133 folds into the S1 motif 1 domain. Residues serine 141–threonine 150 are compositionally biased toward acidic residues. A disordered region spans residues serine 141–aspartate 163. An S1 motif 2 domain is found at methionine 227–phenylalanine 331. The segment at glutamine 772 to valine 798 is disordered. Over residues proline 781–lysine 793 the composition is skewed to basic and acidic residues.

It belongs to the EF-Ts family. As to quaternary structure, component of the chloroplast ribosome 30S and 70S subunits, as well as polysomes. In terms of assembly, component of the chloroplast ribosome 70S subunit, and at low levels, present in polysomes. Associates transiently with chloroplast polysomes.

The protein resides in the plastid. Its subcellular location is the chloroplast. Functionally, associates with the EF-Tu.GDP complex and induces the exchange of GDP to GTP. It remains bound to the aminoacyl-tRNA.EF-Tu.GTP complex up to the GTP hydrolysis stage on the ribosome. In terms of biological role, binds to psbD and psbA mRNAs 5'-untranslated regions (UTRs) in vitro. The protein is Polyprotein of EF-Ts, chloroplastic of Chlamydomonas reinhardtii (Chlamydomonas smithii).